A 142-amino-acid polypeptide reads, in one-letter code: Large ribosomal subunit protein uL11 (142 aa).

Belongs to the universal ribosomal protein uL11 family. In terms of assembly, part of the ribosomal stalk of the 50S ribosomal subunit. Interacts with L10 and the large rRNA to form the base of the stalk. L10 forms an elongated spine to which L12 dimers bind in a sequential fashion forming a multimeric L10(L12)X complex. One or more lysine residues are methylated.

Functionally, forms part of the ribosomal stalk which helps the ribosome interact with GTP-bound translation factors. The protein is Large ribosomal subunit protein uL11 of Rhodopseudomonas palustris (strain BisA53).